Reading from the N-terminus, the 513-residue chain is MSPNKDSSSLNSSGAGLVCLPPVSEELQLVWTQAVQTSELDGNEHLLQAFSYFPYPSLADIALLCLRHGLQMEKVKTWFMAQRLRCGISWSSEEIEETRARVVYHRDQLLFKSLLSFTHHAVRPPQEMPPVTPPEQVALGLRPLALSEPTQMKGLKVEPEEPFQVSQLPLNHQKVKEPLMMGSRTLNHQSDCQDLQISGLSKEQAGGGPDQSCGGGTASWNHSIAVHQPDKSPLISLLDNSCKEESEPSGTPPSSSASSPFQVLANGTTATPKPLQPLGYIPQSFSPSEQALSPQVEPLWSQRLRNNSVPSRVGPTEYLSPDMQHQRKTKRKTKEQLAILKSFFLQCQWARREDYHKLEQITGLPRPEIIQWFGDTRYALKHGQLKWFRDNAVLGTPSFQDPAISTSSTRSLKEWAKTPPLPAPPPPPDIRPLERYWAAHQQLQEADILKLSQASRLSTQQVLDWFDSRLPKPAEVVVCLDEEEEEEDEELPEDGEEEEEEEEEEDDDVIIRD.

The segment at residues 31–90 (WTQAVQTSELDGNEHLLQAFSYFPYPSLADIALLCLRHGLQMEKVKTWFMAQRLRCGISW) is a DNA-binding region (homeobox 1). Glycyl lysine isopeptide (Lys-Gly) (interchain with G-Cter in SUMO2) cross-links involve residues Lys-156, Lys-174, and Lys-176. 5 disordered regions span residues 200–221 (LSKE…ASWN), 241–287 (SCKE…SFSP), 303–328 (RLRN…HQRK), 402–429 (PAIS…PPPD), and 480–513 (LDEE…IIRD). A compositionally biased stretch (gly residues) spans 205 to 217 (AGGGPDQSCGGGT). Low complexity predominate over residues 248 to 260 (PSGTPPSSSASSP). Ser-320 bears the Phosphoserine mark. 2 consecutive DNA-binding regions (homeobox) follow at residues 324–384 (QHQR…KHGQ) and 418–477 (TPPL…AEVV). Residues 327–332 (RKTKRK) carry the Nuclear localization signal motif. Thr-418 bears the Phosphothreonine mark. The segment covering 419–429 (PPLPAPPPPPD) has biased composition (pro residues).

Homodimer or heterodimer (Potential). Interacts with HOXC8.

The protein localises to the nucleus. Its function is as follows. May function as a transcriptional regulator. The polypeptide is Homeobox and leucine zipper protein Homez (Homez) (Rattus norvegicus (Rat)).